The chain runs to 90 residues: uncharacterized protein (90 aa).

The next 2 membrane-spanning stretches (helical) occupy residues 23 to 43 and 48 to 68; these read ITTI…VGLF and VTLL…IIGF.

It localises to the cell membrane. This is an uncharacterized protein from Rickettsia prowazekii (strain Madrid E).